We begin with the raw amino-acid sequence, 474 residues long: Cyclin-dependent kinase 18 (474 aa).

6 positions are modified to phosphoserine: Ser14, Ser74, Ser89, Ser98, Ser117, and Ser132. The segment at 44–87 (DLQLGPLGRDPLQECSTFSPTDSGEEPGQLSPGVQFQRRQNQRR) is disordered. Residues 144 to 425 (YVKLDKLGEG…AEAALSHPYF (282 aa)) enclose the Protein kinase domain. ATP contacts are provided by residues 150–158 (LGEGTYATV) and Lys173. The active-site Proton acceptor is the Asp265. Phosphoserine is present on residues Ser440 and Ser443.

Belongs to the protein kinase superfamily. CMGC Ser/Thr protein kinase family. CDC2/CDKX subfamily.

The enzyme catalyses L-seryl-[protein] + ATP = O-phospho-L-seryl-[protein] + ADP + H(+). The catalysed reaction is L-threonyl-[protein] + ATP = O-phospho-L-threonyl-[protein] + ADP + H(+). May play a role in signal transduction cascades in terminally differentiated cells. The protein is Cyclin-dependent kinase 18 (CDK18) of Pongo abelii (Sumatran orangutan).